The primary structure comprises 74 residues: ATP synthase subunit 9, mitochondrial (74 aa).

2 helical membrane passes run 8 to 28 (IGAG…GNVF) and 50 to 70 (ILGF…AFLI).

This sequence belongs to the ATPase C chain family. As to quaternary structure, F-type ATPases have 2 components, CF(1) - the catalytic core - and CF(0) - the membrane proton channel. CF(1) has five subunits: alpha(3), beta(3), gamma(1), delta(1), epsilon(1). CF(0) has three main subunits: a, b and c.

It localises to the mitochondrion membrane. This protein is one of the chains of the nonenzymatic membrane component (F0) of mitochondrial ATPase. In Brassica napus (Rape), this protein is ATP synthase subunit 9, mitochondrial (ATP9).